Consider the following 566-residue polypeptide: Proline--tRNA ligase (566 aa).

This sequence belongs to the class-II aminoacyl-tRNA synthetase family. ProS type 1 subfamily. Homodimer.

Its subcellular location is the cytoplasm. It carries out the reaction tRNA(Pro) + L-proline + ATP = L-prolyl-tRNA(Pro) + AMP + diphosphate. Its function is as follows. Catalyzes the attachment of proline to tRNA(Pro) in a two-step reaction: proline is first activated by ATP to form Pro-AMP and then transferred to the acceptor end of tRNA(Pro). As ProRS can inadvertently accommodate and process non-cognate amino acids such as alanine and cysteine, to avoid such errors it has two additional distinct editing activities against alanine. One activity is designated as 'pretransfer' editing and involves the tRNA(Pro)-independent hydrolysis of activated Ala-AMP. The other activity is designated 'posttransfer' editing and involves deacylation of mischarged Ala-tRNA(Pro). The misacylated Cys-tRNA(Pro) is not edited by ProRS. The polypeptide is Proline--tRNA ligase (Bacillus cereus (strain B4264)).